A 314-amino-acid polypeptide reads, in one-letter code: DNA topoisomerase 1B (314 aa).

Residues 77–314 enclose the Topo IB-type catalytic domain; sequence VQNRNAKRDR…VDHVKSSTDG (238 aa). The active-site O-(3'-phospho-DNA)-tyrosine intermediate is tyrosine 274.

The protein belongs to the type IB topoisomerase family.

The catalysed reaction is ATP-independent breakage of single-stranded DNA, followed by passage and rejoining.. Functionally, releases the supercoiling and torsional tension of DNA introduced during the DNA replication and transcription by transiently cleaving and rejoining one strand of the DNA duplex. Introduces a single-strand break via transesterification at the specific target site 5'-[CT]CCTTp site in duplex DNA. The scissile phosphodiester is attacked by the catalytic tyrosine of the enzyme, resulting in the formation of a DNA-(3'-phosphotyrosyl)-enzyme intermediate and the expulsion of a 5'-OH DNA strand. The free DNA strand then undergoes passage around the unbroken strand thus removing DNA supercoils. Finally, in the religation step, the DNA 5'-OH attacks the covalent intermediate to expel the active-site tyrosine and restore the DNA phosphodiester backbone. The chain is DNA topoisomerase 1B (TOP1) from Vaccinia virus (strain Ankara) (VACV).